A 120-amino-acid chain; its full sequence is Chaperonin GroEL (120 aa).

An ATP-binding site is contributed by 23–27; it reads DGTTT.

It belongs to the chaperonin (HSP60) family. In terms of assembly, forms a cylinder of 14 subunits composed of two heptameric rings stacked back-to-back. Interacts with the co-chaperonin GroES.

The protein localises to the cytoplasm. The catalysed reaction is ATP + H2O + a folded polypeptide = ADP + phosphate + an unfolded polypeptide.. Functionally, together with its co-chaperonin GroES, plays an essential role in assisting protein folding. The GroEL-GroES system forms a nano-cage that allows encapsulation of the non-native substrate proteins and provides a physical environment optimized to promote and accelerate protein folding. The protein is Chaperonin GroEL of Mycolicibacter nonchromogenicus (Mycobacterium nonchromogenicum).